We begin with the raw amino-acid sequence, 429 residues long: Glutamate-1-semialdehyde 2,1-aminomutase (429 aa).

Lysine 265 carries the N6-(pyridoxal phosphate)lysine modification.

The protein belongs to the class-III pyridoxal-phosphate-dependent aminotransferase family. HemL subfamily. As to quaternary structure, homodimer. Requires pyridoxal 5'-phosphate as cofactor.

It is found in the cytoplasm. The enzyme catalyses (S)-4-amino-5-oxopentanoate = 5-aminolevulinate. The protein operates within porphyrin-containing compound metabolism; protoporphyrin-IX biosynthesis; 5-aminolevulinate from L-glutamyl-tRNA(Glu): step 2/2. In Acidobacterium capsulatum (strain ATCC 51196 / DSM 11244 / BCRC 80197 / JCM 7670 / NBRC 15755 / NCIMB 13165 / 161), this protein is Glutamate-1-semialdehyde 2,1-aminomutase.